The chain runs to 314 residues: tRNA pseudouridine synthase B (314 aa).

His43 contributes to the substrate binding site. The active-site Nucleophile is the Asp48. Residues Tyr76, Tyr179, and Leu200 each coordinate substrate.

The protein belongs to the pseudouridine synthase TruB family. Type 1 subfamily.

The catalysed reaction is uridine(55) in tRNA = pseudouridine(55) in tRNA. Functionally, responsible for synthesis of pseudouridine from uracil-55 in the psi GC loop of transfer RNAs. This Salmonella choleraesuis (strain SC-B67) protein is tRNA pseudouridine synthase B.